The following is a 121-amino-acid chain: Large ribosomal subunit protein bL12 (121 aa).

It belongs to the bacterial ribosomal protein bL12 family. As to quaternary structure, homodimer. Part of the ribosomal stalk of the 50S ribosomal subunit. Forms a multimeric L10(L12)X complex, where L10 forms an elongated spine to which 2 to 4 L12 dimers bind in a sequential fashion. Binds GTP-bound translation factors.

In terms of biological role, forms part of the ribosomal stalk which helps the ribosome interact with GTP-bound translation factors. Is thus essential for accurate translation. This is Large ribosomal subunit protein bL12 from Escherichia coli O45:K1 (strain S88 / ExPEC).